The primary structure comprises 414 residues: Esterase FrsA (414 aa).

Belongs to the FrsA family.

It catalyses the reaction a carboxylic ester + H2O = an alcohol + a carboxylate + H(+). Functionally, catalyzes the hydrolysis of esters. The polypeptide is Esterase FrsA (Salmonella typhi).